A 670-amino-acid chain; its full sequence is Amyloid beta A4 precursor protein-binding family B member 1-interacting protein (670 aa).

At Ser-55 the chain carries Phosphoserine. In terms of domain architecture, Ras-associating spans 179-266; that stretch reads KKLVVKVHMD…KVLFLEKEER (88 aa). Positions 313–422 constitute a PH domain; it reads VPELEGALYL…WVMGIRIAKY (110 aa). The tract at residues 449 to 653 is disordered; it reads VGTPMPAQPS…PGAPGNSEQD (205 aa). Residues 456–475 are compositionally biased toward polar residues; the sequence is QPSTVSSGLKTGTSQPNGQM. Position 532 is a phosphoserine (Ser-532). Thr-534 is modified (phosphothreonine). Ser-537 carries the phosphoserine modification. Composition is skewed to pro residues over residues 553–567, 576–599, 606–615, and 625–634; these read PHPPENFLPPPPPPP, LPPPPPPPYLEEPPDFVPPPPPPA, LPPPPPPPPC, and PLPPKKPLVP.

Belongs to the MRL family. Interacts, through the N-terminal Pro-rich region, with the WW domain of APBB1. Interacts with RAP1A, PFN1, VASP and ENAH. Ubiquitously expressed with high expression in the hematopoietic system.

Its subcellular location is the cell membrane. It localises to the cell projection. The protein resides in the lamellipodium. The protein localises to the cell junction. It is found in the focal adhesion. Its subcellular location is the cytoplasm. It localises to the cytoskeleton. Functionally, appears to function in the signal transduction from Ras activation to actin cytoskeletal remodeling. Suppresses insulin-induced promoter activities through AP1 and SRE. Mediates Rap1-induced adhesion. The protein is Amyloid beta A4 precursor protein-binding family B member 1-interacting protein (Apbb1ip) of Mus musculus (Mouse).